Consider the following 115-residue polypeptide: MKVIATLYGLLFLTVVLGDITEGNENDLVENFREELSEADIPLLKKLEAIEDALLEKDFLPYEEEDRNARPKRCAKVRNWCAKNEDCCCPMKCIGAWYNQQSSCQSTFMGMFKKC.

The N-terminal stretch at 1 to 18 (MKVIATLYGLLFLTVVLG) is a signal peptide. The propeptide occupies 19–73 (DITEGNENDLVENFREELSEADIPLLKKLEAIEDALLEKDFLPYEEEDRNARPKR). 4 disulfides stabilise this stretch: C74–C88, C81–C93, C87–C104, and C89–C115.

The protein belongs to the neurotoxin 06 (delta-actx) family. Expressed by the venom gland.

The protein resides in the secreted. Functionally, neurotoxin that slows inactivation of voltage-gated sodium channels (Nav). In vivo, is lethal to both vertebrates and insects. The sequence is that of Delta-hexatoxin-Hi1a from Hadronyche infensa (Fraser island funnel-web spider).